A 449-amino-acid chain; its full sequence is Endoglucanase A (449 aa).

Residues 1 to 31 constitute a signal peptide (tat-type signal); it reads MSTRRTAAALLAAAAVAVGGLTALTTTAAQA. One can recognise a CBM2 domain in the interval 32-137; the sequence is APGCRVDYAV…SLNGTTCTGT (106 aa). Residues Cys-35 and Cys-134 are joined by a disulfide bond. The interval 127–170 is disordered; sequence FSLNGTTCTGTVPTTSPTPTPTPTTPTPTPTPTPTPTPTVTPQP. Positions 132–141 are enriched in low complexity; the sequence is TTCTGTVPTT. The segment at 139 to 168 is linker ('hinge') (Pro-Thr box); it reads PTTSPTPTPTPTTPTPTPTPTPTPTPTVTP. Residues 142 to 167 are compositionally biased toward pro residues; sequence SPTPTPTPTTPTPTPTPTPTPTPTVT. Asp-247 is a catalytic residue. 2 disulfides stabilise this stretch: Cys-248–Cys-291 and Cys-390–Cys-426. Residue Asp-283 is the Proton donor of the active site. The active-site Nucleophile is the Asp-423. Residues 438 to 449 form a catalytic region; the sequence is EIALEMARNARW.

Belongs to the glycosyl hydrolase 6 (cellulase B) family. In terms of processing, the linker region (also termed 'hinge') may be a potential site for proteolysis. Predicted to be exported by the Tat system. The position of the signal peptide cleavage has not been experimentally proven.

It catalyses the reaction Endohydrolysis of (1-&gt;4)-beta-D-glucosidic linkages in cellulose, lichenin and cereal beta-D-glucans.. Its function is as follows. The biological conversion of cellulose to glucose generally requires three types of hydrolytic enzymes: (1) Endoglucanases which cut internal beta-1,4-glucosidic bonds; (2) Exocellobiohydrolases that cut the disaccharide cellobiose from the non-reducing end of the cellulose polymer chain; (3) Beta-1,4-glucosidases which hydrolyze the cellobiose and other short cello-oligosaccharides to glucose. This chain is Endoglucanase A (cenA), found in Cellulomonas fimi.